The primary structure comprises 538 residues: MFS-type transporter tndD (538 aa).

The interval 1-42 (MSLSGSDSHLAVSPTLAEDMNSSDTSAGLAETPPADEEKRSI) is disordered. N-linked (GlcNAc...) asparagine glycosylation is found at Asn21 and Asn71. 11 helical membrane passes run 81–101 (VGIV…FAPG), 115–135 (LLAG…PLIL), 153–173 (ICFT…MLIA), 203–223 (GGVI…GPVA), 235–255 (WVFW…FLFL), 309–329 (PIVA…YLMF), 348–368 (GLTF…IGAV), 394–414 (LPPL…YGWS), 422–442 (IVPI…FMCI), 444–464 (SYLV…NTVV), and 485–505 (LGWG…IPWA).

The protein belongs to the major facilitator superfamily.

It is found in the membrane. Its function is as follows. MFS-type transporter; part of the gene cluster that mediates the biosynthesis of talaronoid C, a fusicoccane diterpenoid with an unprecedented tricyclic 5/8/6 ring system. The protein is MFS-type transporter tndD of Aspergillus flavipes.